An 856-amino-acid chain; its full sequence is Dynamin-1 (856 aa).

Positions aspartate 28–proline 294 constitute a Dynamin-type G domain. A G1 motif region spans residues glycine 38–serine 45. Serine 41, glycine 43, lysine 44, serine 45, serine 46, arginine 59, and glycine 60 together coordinate GDP. The tract at residues valine 64–arginine 66 is G2 motif. Residue tyrosine 80 is modified to Phosphotyrosine. 3'-nitrotyrosine; alternate is present on tyrosine 125. Tyrosine 125 is modified (phosphotyrosine; alternate). The tract at residues aspartate 136–glycine 139 is G3 motif. The tract at residues threonine 205–aspartate 208 is G4 motif. GDP is bound by residues lysine 206, aspartate 208, aspartate 211, asparagine 236, arginine 237, and glutamine 239. Positions valine 235–serine 238 are G5 motif. Residues serine 306 and serine 347 each carry the phosphoserine modification. At tyrosine 354 the chain carries Phosphotyrosine. Residue serine 512 is modified to Phosphoserine. Positions leucine 519–valine 625 constitute a PH domain. Residues valine 659–valine 750 enclose the GED domain. Residues valine 750–serine 856 are disordered. Over residues leucine 763 to proline 781 the composition is skewed to polar residues. Phosphoserine is present on residues serine 774 and serine 778. Omega-N-methylarginine is present on arginine 796. Serine 822 bears the Phosphoserine mark. The segment covering proline 825–proline 844 has biased composition (pro residues).

The protein belongs to the TRAFAC class dynamin-like GTPase superfamily. Dynamin/Fzo/YdjA family. Homodimer; homodimerization is mediated by the dynamin-type G domain which promotes assembly-stimulated GTPase activity. Homo-tetramer formed from two dimers in the absence of lipid. Oligomerizes into a helical polymer that self-assembles around the vesicle membrane, when associated to the menbrane through lipid binding. Interacts (via C-terminal proline-rich domain (PRD)) with SNX9 (via SH3 domain); this interaction allows regulation of DNM1 self-assembly during late stages of endocytic vesicle formation and supports DNM1's early functions in accelerating clathrin-coated pits (CCPs) maturation in non neuronals cell. Interacts (via C-terminal proline-rich domain (PRD)) with MYO1E (via SH3 domain); this interaction regulates receptor-mediated endocytosis. Interacts with SNX33 (via SH3 domain); this interaction decreases DNM1-dependent endocytosis. Interacts with DIAPH1. Interacts with GRB2 (via SH3 domain); this interaction mediates disassembly of DNM1 polymers, therefore modulates self-assembly. Forms a complex with BIN1 (via SH3 domain) and SH3GL2 (via SH3 domain). Forms a complex with SH3GL2 (via SH3 domain) and AMPH (via SH3 domain). Forms a complex with SH3GL2 (via SH3 domain) and SYNJ1. Interacts with AMPH. Interacts (via C-terminal proline-rich domain (PRD)) with SYT1; this interaction facilitates vesicle fission during clathrin-mediated endocytosis (CME). Interacts (via C-terminal proline-rich domain (PRD)) with PLCG1 (via SH3 domain); this interaction stimulates the release of GDP from DNM1 and enhances DNM1-dependent endocytosis. Interacts with SNPH; this interaction inhibits the binding of DNM1 to AMPH and DNM1-receptor-mediated endocytosis. Interacts with CAV1. Interacts with SH3GLB1 (via SH3 domain). Interacts with PACSIN1 (via SH3 domain), PACSIN2 (via SH3 domain) and PACSIN3 (via SH3 domain). Interacts with UNC119; this interaction decreases DNM1's GTPase activity and affects DNM1's interaction with AMPH. Interacts with AMPH. Interacts (GTP-bound form) with DNAJC6; this interaction allows clathrin-coated vesicle (CCV) formation at the plasma membrane. Post-translationally, phosphorylation at Ser-774 by GSK3B/GSK3-beta leads to inactivation of receptor-mediated endocytosis in non-neuronal cells. Dephosphorylation at Ser-774, through the EGFR downstream signaling, leads to activation and regulates early stages of clathrin-mediated endocytosis (CME).

The protein localises to the cell membrane. It is found in the membrane. The protein resides in the clathrin-coated pit. It localises to the cytoplasmic vesicle. Its subcellular location is the presynapse. The protein localises to the secretory vesicle. It is found in the chromaffin granule. It catalyses the reaction GTP + H2O = GDP + phosphate + H(+). Its function is as follows. Catalyzes the hydrolysis of GTP and utilizes this energy to mediate vesicle scission and participates in many forms of endocytosis, such as clathrin-mediated endocytosis or synaptic vesicle endocytosis as well as rapid endocytosis (RE). Associates to the membrane, through lipid binding, and self-assembles into rings and stacks of interconnected rings through oligomerization to form a helical polymer around the vesicle membrane leading to constriction of invaginated coated pits around their necks. Self-assembly of the helical polymer induces membrane tubules narrowing until the polymer reaches a length sufficient to trigger GTP hydrolysis. Depending on the curvature imposed on the tubules, membrane detachment from the helical polymer upon GTP hydrolysis can cause spontaneous hemifission followed by complete fission. May play a role in regulating early stages of clathrin-mediated endocytosis in non-neuronal cells through its activation by dephosphorylation via the signaling downstream of EGFR. Controls vesicle size at a step before fission, during formation of membrane pits, at hippocampal synapses. Controls plastic adaptation of the synaptic vesicle recycling machinery to high levels of activity. Mediates rapid endocytosis (RE), a Ca(2+)-dependent and clathrin- and K(+)-independent process in chromaffin cells. Microtubule-associated force-producing protein involved in producing microtubule bundles and able to bind and hydrolyze GTP. Through its interaction with DNAJC6, acts during the early steps of clathrin-coated vesicle (CCV) formation. In Bos taurus (Bovine), this protein is Dynamin-1.